Here is a 930-residue protein sequence, read N- to C-terminus: Translation initiation factor IF-2 (930 aa).

The segment at 27–342 (LGLDVKSHSS…APKPVTERKF (316 aa)) is disordered. The span at 52–103 (KAAAPQAPAEKPVAAQPSPQKTPAKEAAPVKAEPTEAKAAAQPEAKTETAAP) shows a compositional bias: low complexity. Basic and acidic residues-rich tracts occupy residues 112-128 (FKAE…ERRK) and 136-178 (QNKE…DGRR). Residues 183–195 (HQGFNGQKRQQPQ) show a composition bias toward polar residues. Over residues 218–245 (RSSEERFKQAQEAKEVMERQNRRKEQPK) the composition is skewed to basic and acidic residues. The span at 251–268 (PVQPAPAPSAPAANPSPA) shows a compositional bias: pro residues. The segment covering 280–297 (ARPDKKRDDFDREEEGPR) has biased composition (basic and acidic residues). The segment covering 302-318 (NRSSQNQVRNQRNSNWN) has biased composition (low complexity). Residues 432 to 599 (ERPPVVTIMG…TVLLVAEIQE (168 aa)) enclose the tr-type G domain. The segment at 441 to 448 (GHVDHGKT) is G1. A GTP-binding site is contributed by 441–448 (GHVDHGKT). The segment at 466–470 (GITQH) is G2. Residues 487 to 490 (DTPG) form a G3 region. Residues 487–491 (DTPGH) and 541–544 (NKID) each bind GTP. Residues 541–544 (NKID) are G4. A G5 region spans residues 577 to 579 (SAK).

It belongs to the TRAFAC class translation factor GTPase superfamily. Classic translation factor GTPase family. IF-2 subfamily.

Its subcellular location is the cytoplasm. Functionally, one of the essential components for the initiation of protein synthesis. Protects formylmethionyl-tRNA from spontaneous hydrolysis and promotes its binding to the 30S ribosomal subunits. Also involved in the hydrolysis of GTP during the formation of the 70S ribosomal complex. This chain is Translation initiation factor IF-2, found in Streptococcus sanguinis (strain SK36).